We begin with the raw amino-acid sequence, 154 residues long: Myoglobin (154 aa).

Residues 2–148 form the Globin domain; the sequence is GLSDGEWQLV…FRNDMAAKYK (147 aa). The residue at position 4 (serine 4) is a Phosphoserine. Residue histidine 65 coordinates nitrite. O2 is bound at residue histidine 65. At threonine 68 the chain carries Phosphothreonine. A heme b-binding site is contributed by histidine 94.

The protein belongs to the globin family. In terms of assembly, monomeric.

It localises to the cytoplasm. Its subcellular location is the sarcoplasm. It carries out the reaction Fe(III)-heme b-[protein] + nitric oxide + H2O = Fe(II)-heme b-[protein] + nitrite + 2 H(+). The enzyme catalyses H2O2 + AH2 = A + 2 H2O. In terms of biological role, monomeric heme protein which primary function is to store oxygen and facilitate its diffusion within muscle tissues. Reversibly binds oxygen through a pentacoordinated heme iron and enables its timely and efficient release as needed during periods of heightened demand. Depending on the oxidative conditions of tissues and cells, and in addition to its ability to bind oxygen, it also has a nitrite reductase activity whereby it regulates the production of bioactive nitric oxide. Under stress conditions, like hypoxia and anoxia, it also protects cells against reactive oxygen species thanks to its pseudoperoxidase activity. The protein is Myoglobin (MB) of Didelphis virginiana (North American opossum).